The following is a 442-amino-acid chain: Histidine--tRNA ligase (442 aa).

It belongs to the class-II aminoacyl-tRNA synthetase family. Homodimer.

It localises to the cytoplasm. It catalyses the reaction tRNA(His) + L-histidine + ATP = L-histidyl-tRNA(His) + AMP + diphosphate + H(+). This Helicobacter pylori (strain ATCC 700392 / 26695) (Campylobacter pylori) protein is Histidine--tRNA ligase (hisS).